A 691-amino-acid polypeptide reads, in one-letter code: 1-butanol dehydrogenase (cytochrome c) (691 aa).

Positions 1–38 (MLTTTFARKREESVPLRKGIQRALLGLSCLVLSTTSFA) are cleaved as a signal peptide. E84 lines the pyrroloquinoline quinone pocket. C130 and C131 form a disulfide bridge. Residues R136, T181, and 197–198 (GA) contribute to the pyrroloquinoline quinone site. The Ca(2+) site is built by E199 and D322. The active-site Proton acceptor is the D322. Residues K349, 408 to 409 (NW), and V558 contribute to the pyrroloquinoline quinone site. Residues 605 to 684 (DDVAEGTGLY…KIKAFILGTA (80 aa)) enclose the Cytochrome c domain. Residues C618, C621, H622, and M661 each contribute to the heme c site.

The protein belongs to the bacterial PQQ dehydrogenase family. As to quaternary structure, monomer. It depends on pyrroloquinoline quinone as a cofactor. Requires Ca(2+) as cofactor. Heme c is required as a cofactor.

The protein localises to the periplasm. It carries out the reaction butan-1-ol + 2 Fe(III)-[cytochrome c] = butanal + 2 Fe(II)-[cytochrome c] + 2 H(+). Its activity is regulated as follows. Dehydrogenase activity is increased by ammonium ions. Its function is as follows. Involved in the metabolism of butane. Could be important in the detoxification of 1-butanol. Catalyzes the oxidation of 1-butanol to butyraldehyde. Also able to use 1-propanol, 2-pentanol, propionaldehyde and butyraldehyde as substrates. The polypeptide is 1-butanol dehydrogenase (cytochrome c) (Thauera butanivorans (strain ATCC 43655 / DSM 2080 / JCM 20651 / CCUG 51053 / NBRC 103042 / IAM 12574 / Bu B1211) (Pseudomonas butanovora)).